We begin with the raw amino-acid sequence, 463 residues long: uncharacterized protein (463 aa).

The HTH gntR-type domain maps to 13-81 (IPLYQQLYRY…PRSGWFADYH (69 aa)). Positions 41–60 (KRLLANQLSISQTTVERAYE) form a DNA-binding region, H-T-H motif. N6-(pyridoxal phosphate)lysine is present on K308.

In the C-terminal section; belongs to the class-I pyridoxal-phosphate-dependent aminotransferase family. It depends on pyridoxal 5'-phosphate as a cofactor.

This is an uncharacterized protein from Bacillus subtilis (strain 168).